Here is a 494-residue protein sequence, read N- to C-terminus: Ketol-acid reductoisomerase (NADP(+)) (494 aa).

In terms of domain architecture, KARI N-terminal Rossmann spans 14 to 208; that stretch reads LDQLGRCRFM…GGHRAGCLES (195 aa). NADP(+)-binding positions include 45–48, Arg-68, Arg-76, Ser-78, and 108–110; these read CGAQ and DKQ. Residue His-132 is part of the active site. Gly-158 lines the NADP(+) pocket. 2 KARI C-terminal knotted domains span residues 209–344 and 345–487; these read SFVA…NYPA and SDVE…MSDM. 4 residues coordinate Mg(2+): Asp-217, Glu-221, Glu-389, and Glu-393. Ser-414 contacts substrate.

Belongs to the ketol-acid reductoisomerase family. Requires Mg(2+) as cofactor.

It catalyses the reaction (2R)-2,3-dihydroxy-3-methylbutanoate + NADP(+) = (2S)-2-acetolactate + NADPH + H(+). The enzyme catalyses (2R,3R)-2,3-dihydroxy-3-methylpentanoate + NADP(+) = (S)-2-ethyl-2-hydroxy-3-oxobutanoate + NADPH + H(+). Its pathway is amino-acid biosynthesis; L-isoleucine biosynthesis; L-isoleucine from 2-oxobutanoate: step 2/4. The protein operates within amino-acid biosynthesis; L-valine biosynthesis; L-valine from pyruvate: step 2/4. Its function is as follows. Involved in the biosynthesis of branched-chain amino acids (BCAA). Catalyzes an alkyl-migration followed by a ketol-acid reduction of (S)-2-acetolactate (S2AL) to yield (R)-2,3-dihydroxy-isovalerate. In the isomerase reaction, S2AL is rearranged via a Mg-dependent methyl migration to produce 3-hydroxy-3-methyl-2-ketobutyrate (HMKB). In the reductase reaction, this 2-ketoacid undergoes a metal-dependent reduction by NADPH to yield (R)-2,3-dihydroxy-isovalerate. The sequence is that of Ketol-acid reductoisomerase (NADP(+)) from Vibrio atlanticus (strain LGP32) (Vibrio splendidus (strain Mel32)).